The following is a 342-amino-acid chain: Galactose mutarotase (342 aa).

Residues 81–82 (NR) and His-107 contribute to the beta-D-galactose site. Phosphoserine is present on Ser-124. His-176 functions as the Proton donor in the catalytic mechanism. Beta-D-galactose is bound by residues 176–178 (HSY), Asp-243, Gln-279, and Glu-307. Glu-307 functions as the Proton acceptor in the catalytic mechanism.

This sequence belongs to the aldose epimerase family. As to quaternary structure, monomer.

It is found in the cytoplasm. The enzyme catalyses alpha-D-galactose = beta-D-galactose. It catalyses the reaction alpha-D-glucose = beta-D-glucose. The protein operates within carbohydrate metabolism; hexose metabolism. It functions in the pathway carbohydrate metabolism; galactose metabolism. Mutarotase that catalyzes the interconversion of beta-D-galactose and alpha-D-galactose during galactose metabolism. Beta-D-galactose is metabolized in the liver into glucose 1-phosphate, the primary metabolic fuel, by the action of four enzymes that constitute the Leloir pathway: GALM, GALK1 (galactokinase), GALT (galactose-1-phosphate uridylyltransferase) and GALE (UDP-galactose-4'-epimerase). Involved in the maintenance of the equilibrium between the beta- and alpha-anomers of galactose, therefore ensuring a sufficient supply of the alpha-anomer for GALK1. Also active on D-glucose although shows a preference for galactose over glucose. The polypeptide is Galactose mutarotase (GALM) (Bos taurus (Bovine)).